A 152-amino-acid polypeptide reads, in one-letter code: Sorting nexin-3 (152 aa).

Residues 30–147 (NFLEIEVRSP…CAFIQDPQWD (118 aa)) form the PX domain. The a 1,2-diacyl-sn-glycero-3-phospho-(1D-myo-inositol-3-phosphate) site is built by R73, S75, K99, R104, and R113.

The protein belongs to the sorting nexin family.

The protein localises to the cytoplasm. The protein resides in the golgi apparatus membrane. Its subcellular location is the prevacuolar compartment membrane. In terms of biological role, required for retention of late Golgi membrane proteins. Component of the retrieval machinery that functions by direct interaction with the cytosolic tails of certain TGN membrane proteins during the sorting/budding process at the prevacuolar compartment. Binds phosphatidylinositol 3-phosphate (PtdIns(P3)). The chain is Sorting nexin-3 (SNX3) from Yarrowia lipolytica (strain CLIB 122 / E 150) (Yeast).